The primary structure comprises 357 residues: Quinolinate synthase (357 aa).

Positions 50 and 71 each coordinate iminosuccinate. A [4Fe-4S] cluster-binding site is contributed by C116. Iminosuccinate contacts are provided by residues 142–144 (YAN) and S159. [4Fe-4S] cluster is bound at residue C203. Residues 229–231 (HPE) and T246 each bind iminosuccinate. C300 is a [4Fe-4S] cluster binding site.

It belongs to the quinolinate synthase family. Type 1 subfamily. Requires [4Fe-4S] cluster as cofactor.

It localises to the cytoplasm. The catalysed reaction is iminosuccinate + dihydroxyacetone phosphate = quinolinate + phosphate + 2 H2O + H(+). It functions in the pathway cofactor biosynthesis; NAD(+) biosynthesis; quinolinate from iminoaspartate: step 1/1. Functionally, catalyzes the condensation of iminoaspartate with dihydroxyacetone phosphate to form quinolinate. The sequence is that of Quinolinate synthase from Shewanella sp. (strain ANA-3).